Here is a 199-residue protein sequence, read N- to C-terminus: Heparin-binding hemagglutinin (199 aa).

A compositionally biased stretch (low complexity) spans 162–180 (KAAPAKKAAPAKKAAPAKK). A disordered region spans residues 162–199 (KAAPAKKAAPAKKAAPAKKAAAKKAPAKKAAAKKVTQK). Basic residues predominate over residues 181–199 (AAAKKAPAKKAAAKKVTQK).

This sequence to M.leprae HbhA. Post-translationally, glycosylated. Glycosylation may protect the protein from proteolytic degradation and be important for hemagglutination. It suggests that the carbohydrate moiety may be located within the C-terminal domain of HbhA.

Its subcellular location is the cell surface. Its function is as follows. Required for extrapulmonary dissemination. Mediates adherence to epithelial cells by binding to sulfated glycoconjugates present at the surface of these cells. The sequence is that of Heparin-binding hemagglutinin (hbhA) from Mycobacterium tuberculosis (strain CDC 1551 / Oshkosh).